The primary structure comprises 133 residues: Putative dispanin subfamily A member 2d (133 aa).

Over Met1–His57 the chain is Extracellular. Lys24 is covalently cross-linked (Glycyl lysine isopeptide (Lys-Gly) (interchain with G-Cter in ubiquitin)). A helical membrane pass occupies residues Val58–Phe78. At Ala79–Asn107 the chain is on the cytoplasmic side. Residues Lys83, Lys88, and Lys104 each participate in a glycyl lysine isopeptide (Lys-Gly) (interchain with G-Cter in ubiquitin) cross-link. The chain crosses the membrane as a helical span at residues Ile108–Ile128. Topologically, residues Phe129–Arg133 are extracellular.

This sequence belongs to the CD225/Dispanin family.

The protein localises to the membrane. In Homo sapiens (Human), this protein is Putative dispanin subfamily A member 2d.